A 302-amino-acid chain; its full sequence is Cardiolipin synthase (CMP-forming) (302 aa).

Residues 65–84 (PRTHCSGAGKAAPEPAAGGD) are disordered. Residues 71 to 84 (GAGKAAPEPAAGGD) show a composition bias toward low complexity. A run of 5 helical transmembrane segments spans residues 109 to 129 (IPNL…YLIL), 133 to 153 (FNVA…DGFI), 190 to 212 (IPVP…VFYV), 250 to 270 (LILV…SIYL), and 271 to 289 (QILW…YSYY).

It belongs to the CDP-alcohol phosphatidyltransferase class-I family. Requires a divalent metal cation as cofactor.

The protein resides in the mitochondrion inner membrane. It carries out the reaction a CDP-1,2-diacyl-sn-glycerol + a 1,2-diacyl-sn-glycero-3-phospho-(1'-sn-glycerol) = a cardiolipin + CMP + H(+). Functionally, catalyzes the synthesis of cardiolipin (CL) (diphosphatidylglycerol) by specifically transferring a phosphatidyl group from CDP-diacylglycerol to phosphatidylglycerol (PG). CL is a key phospholipid in mitochondrial membranes and plays important roles in maintaining the functional integrity and dynamics of mitochondria under both optimal and stress conditions. The sequence is that of Cardiolipin synthase (CMP-forming) (Crls1) from Rattus norvegicus (Rat).